Here is a 361-residue protein sequence, read N- to C-terminus: Peroxidase A (361 aa).

It belongs to the peroxidase family. Partially N-glycosylated.

The protein resides in the secreted. The enzyme catalyses 2 a phenolic donor + H2O2 = 2 a phenolic radical donor + 2 H2O. This chain is Peroxidase A, found in Aloe vera (Aloe).